Reading from the N-terminus, the 446-residue chain is UDP-N-acetylmuramoylalanine--D-glutamate ligase (446 aa).

116-122 (GSNGKTT) is a binding site for ATP.

Belongs to the MurCDEF family.

The protein localises to the cytoplasm. It carries out the reaction UDP-N-acetyl-alpha-D-muramoyl-L-alanine + D-glutamate + ATP = UDP-N-acetyl-alpha-D-muramoyl-L-alanyl-D-glutamate + ADP + phosphate + H(+). It functions in the pathway cell wall biogenesis; peptidoglycan biosynthesis. Functionally, cell wall formation. Catalyzes the addition of glutamate to the nucleotide precursor UDP-N-acetylmuramoyl-L-alanine (UMA). The chain is UDP-N-acetylmuramoylalanine--D-glutamate ligase from Marinobacter nauticus (strain ATCC 700491 / DSM 11845 / VT8) (Marinobacter aquaeolei).